Reading from the N-terminus, the 943-residue chain is Translation initiation factor IF-2 (943 aa).

Low complexity predominate over residues 99-113 (VKAAQTQAAPVQPEQ). A disordered region spans residues 99 to 354 (VKAAQTQAAP…LEPNQHAFQA (256 aa)). Over residues 117–141 (DAVKARAEAAARAEARAKAEAEAAK) the composition is skewed to basic and acidic residues. Over residues 145–172 (AKAGNKAKPAAQKPTEAKAETAPVAAET) the composition is skewed to low complexity. Residues 173–197 (KPAEPKEKAVKPKHERNGKGKDAKK) show a composition bias toward basic and acidic residues. The segment covering 200–215 (KPAAPAVPQPVVSAEE) has biased composition (low complexity). Over residues 216-250 (QAQRDEEARRAAALRAHQEALLKEKQERQARREAM) the composition is skewed to basic and acidic residues. Residues 251 to 264 (KQQAEQQAKAAQEA) are compositionally biased toward low complexity. 2 stretches are compositionally biased toward basic and acidic residues: residues 295–308 (AKKEDRRNRDDEGQ) and 319–335 (GGRDRNNARNGGDERVR). In terms of domain architecture, tr-type G spans 443–612 (PRPPVVTVMG…LLEAEVLELT (170 aa)). A G1 region spans residues 452–459 (GHVDHGKT). GTP is bound at residue 452-459 (GHVDHGKT). The segment at 477–481 (GITQH) is G2. The tract at residues 498–501 (DTPG) is G3. GTP contacts are provided by residues 498–502 (DTPGH) and 552–555 (NKID). The tract at residues 552–555 (NKID) is G4. Residues 588-590 (SAK) are G5.

Belongs to the TRAFAC class translation factor GTPase superfamily. Classic translation factor GTPase family. IF-2 subfamily.

Its subcellular location is the cytoplasm. In terms of biological role, one of the essential components for the initiation of protein synthesis. Protects formylmethionyl-tRNA from spontaneous hydrolysis and promotes its binding to the 30S ribosomal subunits. Also involved in the hydrolysis of GTP during the formation of the 70S ribosomal complex. The protein is Translation initiation factor IF-2 of Neisseria gonorrhoeae (strain NCCP11945).